A 214-amino-acid chain; its full sequence is Small ribosomal subunit protein uS5 (214 aa).

An S5 DRBM domain is found at 54–117 (MKYEVIDIGM…RDAKMHVIPV (64 aa)).

It belongs to the universal ribosomal protein uS5 family. In terms of assembly, part of the 30S ribosomal subunit. Contacts protein S4.

With S4 and S12 plays an important role in translational accuracy. The sequence is that of Small ribosomal subunit protein uS5 from Metallosphaera sedula (strain ATCC 51363 / DSM 5348 / JCM 9185 / NBRC 15509 / TH2).